The following is a 361-amino-acid chain: Chorismate synthase (361 aa).

2 residues coordinate NADP(+): arginine 48 and arginine 54. FMN is bound by residues arginine 125 to serine 127, asparagine 238 to alanine 239, glycine 278, lysine 293 to serine 297, and arginine 319.

This sequence belongs to the chorismate synthase family. Homotetramer. Requires FMNH2 as cofactor.

It catalyses the reaction 5-O-(1-carboxyvinyl)-3-phosphoshikimate = chorismate + phosphate. It functions in the pathway metabolic intermediate biosynthesis; chorismate biosynthesis; chorismate from D-erythrose 4-phosphate and phosphoenolpyruvate: step 7/7. Its function is as follows. Catalyzes the anti-1,4-elimination of the C-3 phosphate and the C-6 proR hydrogen from 5-enolpyruvylshikimate-3-phosphate (EPSP) to yield chorismate, which is the branch point compound that serves as the starting substrate for the three terminal pathways of aromatic amino acid biosynthesis. This reaction introduces a second double bond into the aromatic ring system. In Vibrio parahaemolyticus serotype O3:K6 (strain RIMD 2210633), this protein is Chorismate synthase.